A 404-amino-acid polypeptide reads, in one-letter code: Serine/threonine transporter SstT (404 aa).

8 consecutive transmembrane segments (helical) span residues 17–37, 39–59, 75–95, 138–158, 179–199, 212–232, 287–307, and 313–333; these read IGIG…LTGF, ILGK…VFAL, MTLI…VAVL, ALAT…GLAL, IVVW…FTTI, FLIL…NPLI, IPLG…VLTL, and FGIP…AVSA.

Belongs to the dicarboxylate/amino acid:cation symporter (DAACS) (TC 2.A.23) family.

Its subcellular location is the cell membrane. It carries out the reaction L-serine(in) + Na(+)(in) = L-serine(out) + Na(+)(out). The enzyme catalyses L-threonine(in) + Na(+)(in) = L-threonine(out) + Na(+)(out). Functionally, involved in the import of serine and threonine into the cell, with the concomitant import of sodium (symport system). This Streptococcus pyogenes serotype M2 (strain MGAS10270) protein is Serine/threonine transporter SstT.